A 647-amino-acid polypeptide reads, in one-letter code: DNA ligase (647 aa).

Residues 30–34 (DEEYD), 79–80 (SM), and glutamate 105 each bind NAD(+). Catalysis depends on lysine 107, which acts as the N6-AMP-lysine intermediate. Residues arginine 128, glutamate 162, and lysine 301 each contribute to the NAD(+) site. Zn(2+) is bound by residues cysteine 395, cysteine 398, cysteine 411, and cysteine 416. The BRCT domain maps to 570 to 647 (KSDGVIFGKT…ESAFNELVKE (78 aa)).

Belongs to the NAD-dependent DNA ligase family. LigA subfamily. The cofactor is Mg(2+). Requires Mn(2+) as cofactor.

The catalysed reaction is NAD(+) + (deoxyribonucleotide)n-3'-hydroxyl + 5'-phospho-(deoxyribonucleotide)m = (deoxyribonucleotide)n+m + AMP + beta-nicotinamide D-nucleotide.. In terms of biological role, DNA ligase that catalyzes the formation of phosphodiester linkages between 5'-phosphoryl and 3'-hydroxyl groups in double-stranded DNA using NAD as a coenzyme and as the energy source for the reaction. It is essential for DNA replication and repair of damaged DNA. This is DNA ligase from Campylobacter jejuni (strain RM1221).